We begin with the raw amino-acid sequence, 29 residues long: NADH dehydrogenase [ubiquinone] 1 beta subcomplex subunit 10 (29 aa).

Residues 1 to 29 (GRKKGVQFDEGAPDDFDPNNPYKKDVAFL) form a disordered region.

This sequence belongs to the complex I NDUFB10 subunit family. As to quaternary structure, complex I is composed of about 45 different subunits.

It is found in the mitochondrion inner membrane. In terms of biological role, accessory subunit of the mitochondrial membrane respiratory chain NADH dehydrogenase (Complex I), that is believed not to be involved in catalysis. Complex I functions in the transfer of electrons from NADH to the respiratory chain. The immediate electron acceptor for the enzyme is believed to be ubiquinone. This is NADH dehydrogenase [ubiquinone] 1 beta subcomplex subunit 10 from Solanum tuberosum (Potato).